We begin with the raw amino-acid sequence, 248 residues long: UPF0246 protein RC0754 (248 aa).

This sequence belongs to the UPF0246 family.

This is UPF0246 protein RC0754 from Rickettsia conorii (strain ATCC VR-613 / Malish 7).